The following is a 403-amino-acid chain: Dynactin subunit 2-A (403 aa).

Residues Met1–Pro26 are disordered. A coiled-coil region spans residues Pro99–Lys132. A disordered region spans residues Ala183–Thr203. A coiled-coil region spans residues Lys381–Leu401.

It belongs to the dynactin subunit 2 family. Subunit of dynactin, a multiprotein complex part of a tripartite complex with dynein and a adapter, such as BICDL1, BICD2 or HOOK3. The dynactin complex is built around ACTR1A/ACTB filament and consists of an actin-related filament composed of a shoulder domain, a pointed end and a barbed end. Its length is defined by its flexible shoulder domain. The soulder is composed of 2 DCTN1 subunits, 4 DCTN2 and 2 DCTN3.

The protein resides in the cytoplasm. It is found in the cytoskeleton. It localises to the microtubule organizing center. Its subcellular location is the centrosome. The protein localises to the membrane. Its function is as follows. Part of the dynactin complex that activates the molecular motor dynein for ultra-processive transport along microtubules. In the dynactin soulder domain, binds the ACTR1A filament and acts as a molecular ruler to determine the length. Modulates cytoplasmic dynein binding to an organelle, and plays a role in prometaphase chromosome alignment and spindle organization during mitosis. Involved in anchoring microtubules to centrosomes. The sequence is that of Dynactin subunit 2-A (dctn2-a) from Xenopus laevis (African clawed frog).